We begin with the raw amino-acid sequence, 542 residues long: Probable cysteine proteinase 361L (542 aa).

Active-site residues include Cys172, His382, and Asn414. The chain crosses the membrane as a helical span at residues 520–540 (TNNWYIYALIIIFILIIFFVL).

Belongs to the peptidase C1 family.

The protein resides in the membrane. In terms of biological role, probable cysteine protease. This Acheta domesticus (House cricket) protein is Probable cysteine proteinase 361L.